Reading from the N-terminus, the 164-residue chain is Ribosome maturation factor RimP (164 aa).

The protein belongs to the RimP family.

The protein localises to the cytoplasm. Functionally, required for maturation of 30S ribosomal subunits. This is Ribosome maturation factor RimP from Mycoplasma mycoides subsp. mycoides SC (strain CCUG 32753 / NCTC 10114 / PG1).